The chain runs to 352 residues: Ribosomal RNA large subunit methyltransferase M (352 aa).

Residues Ser187, 218–221 (APGG), Asp237, Asp257, and Asp273 each bind S-adenosyl-L-methionine. The active-site Proton acceptor is the Lys302.

Belongs to the class I-like SAM-binding methyltransferase superfamily. RNA methyltransferase RlmE family. RlmM subfamily. In terms of assembly, monomer.

It is found in the cytoplasm. The enzyme catalyses cytidine(2498) in 23S rRNA + S-adenosyl-L-methionine = 2'-O-methylcytidine(2498) in 23S rRNA + S-adenosyl-L-homocysteine + H(+). Functionally, catalyzes the 2'-O-methylation at nucleotide C2498 in 23S rRNA. In Methylococcus capsulatus (strain ATCC 33009 / NCIMB 11132 / Bath), this protein is Ribosomal RNA large subunit methyltransferase M.